Here is a 429-residue protein sequence, read N- to C-terminus: GTPase Obg (429 aa).

Residues 1–158 (MFVDQVKIYV…RNVQLELKVL (158 aa)) enclose the Obg domain. The segment at 124-145 (RGNKRFATPANPAPELSENGEP) is disordered. The region spanning 159 to 329 (ADVGLVGFPS…LLLAIADKLE (171 aa)) is the OBG-type G domain. Residues 165 to 172 (GFPSVGKS), 190 to 194 (FTTIV), 212 to 215 (DLPG), 282 to 285 (NKMD), and 310 to 312 (SAV) contribute to the GTP site. Residues Ser-172 and Thr-192 each coordinate Mg(2+). The 79-residue stretch at 351–429 (KYIAEEPDFE…LLDYEFEFMD (79 aa)) folds into the OCT domain.

This sequence belongs to the TRAFAC class OBG-HflX-like GTPase superfamily. OBG GTPase family. In terms of assembly, monomer. Requires Mg(2+) as cofactor.

The protein resides in the cytoplasm. An essential GTPase which binds GTP, GDP and possibly (p)ppGpp with moderate affinity, with high nucleotide exchange rates and a fairly low GTP hydrolysis rate. Plays a role in control of the cell cycle, stress response, ribosome biogenesis and in those bacteria that undergo differentiation, in morphogenesis control. The protein is GTPase Obg of Listeria welshimeri serovar 6b (strain ATCC 35897 / DSM 20650 / CCUG 15529 / CIP 8149 / NCTC 11857 / SLCC 5334 / V8).